Reading from the N-terminus, the 242-residue chain is Pyridoxine 5'-phosphate synthase (242 aa).

N8 is a binding site for 3-amino-2-oxopropyl phosphate. Residue 10-11 (DH) participates in 1-deoxy-D-xylulose 5-phosphate binding. Residue R19 participates in 3-amino-2-oxopropyl phosphate binding. H44 (proton acceptor) is an active-site residue. The 1-deoxy-D-xylulose 5-phosphate site is built by R46 and H51. Residue E71 is the Proton acceptor of the active site. T101 lines the 1-deoxy-D-xylulose 5-phosphate pocket. The active-site Proton donor is H193. 3-amino-2-oxopropyl phosphate contacts are provided by residues G194 and 215-216 (GF).

This sequence belongs to the PNP synthase family. In terms of assembly, homooctamer; tetramer of dimers.

The protein localises to the cytoplasm. It carries out the reaction 3-amino-2-oxopropyl phosphate + 1-deoxy-D-xylulose 5-phosphate = pyridoxine 5'-phosphate + phosphate + 2 H2O + H(+). It functions in the pathway cofactor biosynthesis; pyridoxine 5'-phosphate biosynthesis; pyridoxine 5'-phosphate from D-erythrose 4-phosphate: step 5/5. In terms of biological role, catalyzes the complicated ring closure reaction between the two acyclic compounds 1-deoxy-D-xylulose-5-phosphate (DXP) and 3-amino-2-oxopropyl phosphate (1-amino-acetone-3-phosphate or AAP) to form pyridoxine 5'-phosphate (PNP) and inorganic phosphate. The protein is Pyridoxine 5'-phosphate synthase of Elusimicrobium minutum (strain Pei191).